A 150-amino-acid polypeptide reads, in one-letter code: Endoribonuclease YbeY (150 aa).

H112, H116, and H122 together coordinate Zn(2+).

It belongs to the endoribonuclease YbeY family. Requires Zn(2+) as cofactor.

The protein resides in the cytoplasm. Single strand-specific metallo-endoribonuclease involved in late-stage 70S ribosome quality control and in maturation of the 3' terminus of the 16S rRNA. This Bdellovibrio bacteriovorus (strain ATCC 15356 / DSM 50701 / NCIMB 9529 / HD100) protein is Endoribonuclease YbeY.